The chain runs to 330 residues: DNA-directed RNA polymerase subunit alpha (330 aa).

The segment at 1 to 236 (MQGSVTEFLK…EQLDAFVDLR (236 aa)) is alpha N-terminal domain (alpha-NTD). Residues 250–330 (FDPILLRPVD…NWPPASIAED (81 aa)) are alpha C-terminal domain (alpha-CTD).

This sequence belongs to the RNA polymerase alpha chain family. Homodimer. The RNAP catalytic core consists of 2 alpha, 1 beta, 1 beta' and 1 omega subunit. When a sigma factor is associated with the core the holoenzyme is formed, which can initiate transcription.

It catalyses the reaction RNA(n) + a ribonucleoside 5'-triphosphate = RNA(n+1) + diphosphate. DNA-dependent RNA polymerase catalyzes the transcription of DNA into RNA using the four ribonucleoside triphosphates as substrates. This is DNA-directed RNA polymerase subunit alpha from Vibrio parahaemolyticus serotype O3:K6 (strain RIMD 2210633).